The following is a 227-amino-acid chain: uncharacterized protein (227 aa).

17–24 (GKTGCGKT) contacts ATP.

This is an uncharacterized protein from Methanocaldococcus jannaschii (strain ATCC 43067 / DSM 2661 / JAL-1 / JCM 10045 / NBRC 100440) (Methanococcus jannaschii).